The primary structure comprises 444 residues: Methylenetetrahydrofolate--tRNA-(uracil-5-)-methyltransferase TrmFO (444 aa).

11-16 (GGGLAG) serves as a coordination point for FAD.

It belongs to the MnmG family. TrmFO subfamily. FAD is required as a cofactor.

The protein localises to the cytoplasm. The enzyme catalyses uridine(54) in tRNA + (6R)-5,10-methylene-5,6,7,8-tetrahydrofolate + NADH + H(+) = 5-methyluridine(54) in tRNA + (6S)-5,6,7,8-tetrahydrofolate + NAD(+). The catalysed reaction is uridine(54) in tRNA + (6R)-5,10-methylene-5,6,7,8-tetrahydrofolate + NADPH + H(+) = 5-methyluridine(54) in tRNA + (6S)-5,6,7,8-tetrahydrofolate + NADP(+). In terms of biological role, catalyzes the folate-dependent formation of 5-methyl-uridine at position 54 (M-5-U54) in all tRNAs. In Desulfotalea psychrophila (strain LSv54 / DSM 12343), this protein is Methylenetetrahydrofolate--tRNA-(uracil-5-)-methyltransferase TrmFO.